The chain runs to 374 residues: Tuliposide A-converting enzyme b3, amyloplastic (374 aa).

An amyloplast-targeting transit peptide spans 1–68 (MSAALFCGPP…TNSSLSPSPT (68 aa)). Ser226 acts as the Acyl-ester intermediate in catalysis. Residues Asp316 and His348 each act as charge relay system in the active site.

This sequence belongs to the AB hydrolase superfamily. As to quaternary structure, homodimer. In terms of tissue distribution, highly expressed in pistil and bulb scales. Lower expression in stem, and barely detected in root, leaf, petal and stamen.

The protein resides in the plastid. It localises to the amyloplast. The catalysed reaction is 6-tuliposide A = tulipalin A + D-glucose. Functionally, lactone-forming carboxylesterases, specifically catalyzing intramolecular transesterification, but not hydrolysis. Involved in the biosynthesis of tulipalins, defensive chemicals that show antimicrobial activities against a broad range of strains of bacteria and fungi. Substrates are 6-tuliposide A &gt; 6-tuliposide B. The chain is Tuliposide A-converting enzyme b3, amyloplastic (TCEA-B3) from Tulipa gesneriana (Garden tulip).